The sequence spans 646 residues: ATP-dependent zinc metalloprotease FtsH (646 aa).

The interval 1-27 (MTNNQTDRPRPPGPESRRFDNNDKNNR) is disordered. Residues 1–35 (MTNNQTDRPRPPGPESRRFDNNDKNNRNRWGPIPS) are Cytoplasmic-facing. Residues 7–26 (DRPRPPGPESRRFDNNDKNN) show a composition bias toward basic and acidic residues. A helical membrane pass occupies residues 36–56 (WAWIVLIVALLLNWLVAPILF). The Extracellular portion of the chain corresponds to 57–144 (PEGKGAVSIP…QPESSTRSLL (88 aa)). The chain crosses the membrane as a helical span at residues 145-165 (LSILISFGPTILFFLLFLWLI). Residues 166-646 (SKAQSSQQGL…GLGEKQPEPA (481 aa)) are Cytoplasmic-facing. 237–244 (GPPGTGKT) is an ATP binding site. H459 provides a ligand contact to Zn(2+). E460 is an active-site residue. 2 residues coordinate Zn(2+): H463 and D535.

The protein in the central section; belongs to the AAA ATPase family. It in the C-terminal section; belongs to the peptidase M41 family. In terms of assembly, homohexamer. Requires Zn(2+) as cofactor.

The protein resides in the cell membrane. Functionally, acts as a processive, ATP-dependent zinc metallopeptidase for both cytoplasmic and membrane proteins. Plays a role in the quality control of integral membrane proteins. The polypeptide is ATP-dependent zinc metalloprotease FtsH (Thermobaculum terrenum (strain ATCC BAA-798 / CCMEE 7001 / YNP1)).